Consider the following 446-residue polypeptide: Mitochondrial ribonuclease P protein 1 homolog (446 aa).

The transit peptide at 1–24 (MLKHFARWRLGSQLLKGCAAPVRQ) directs the protein to the mitochondrion. The segment at 41 to 67 (PQKKFVNPFSQPAPALSNDTISENKEE) is disordered. Phosphoserine occurs at positions 50 and 57. Thr-60 carries the post-translational modification Phosphothreonine. At Ser-62 the chain carries Phosphoserine. The stretch at 119 to 158 (LWQIEMKKEADQRKKAERAKEAERRVAEMRKEREENTHII) forms a coiled coil. In terms of domain architecture, SAM-dependent MTase TRM10-type spans 179–373 (QNNRLTRAMQ…KHVPRRKVVQ (195 aa)).

This sequence belongs to the class IV-like SAM-binding methyltransferase superfamily. TRM10 family. In terms of assembly, component of mitochondrial ribonuclease P, a complex composed of rswl/MRPP1, scu/MRPP2 and mldr/MRPP3.

It is found in the mitochondrion. Its function is as follows. Mitochondrial tRNA N1-methyltransferase involved in mitochondrial tRNA maturation. Component of mitochondrial ribonuclease P, a complex composed of rswl/MRPP1, scu/MRPP2 and mldr/MRPP3., which cleaves tRNA molecules in their 5'-ends. Essential for the structural and functional integrity of mitochondria. Function is essential for pupal development. The sequence is that of Mitochondrial ribonuclease P protein 1 homolog from Drosophila melanogaster (Fruit fly).